We begin with the raw amino-acid sequence, 311 residues long: Heme A synthase (311 aa).

At 1–6 the chain is on the cytoplasmic side; the sequence is MQRFIK. The helical transmembrane segment at 7-27 threads the bilayer; it reads WLAVITSLDLLVVLLGGALVT. The Extracellular segment spans residues 28 to 62; it reads KTGSGQGCGKSWPLCNGEFVPSNLSMETIIELSHR. Cys-35 and Cys-42 are disulfide-bonded. Residue Glu-58 is part of the active site. His-61 is a heme o binding site. A helical transmembrane segment spans residues 63 to 83; the sequence is LTSGSAGILVTLLCILSWKYY. At 84 to 91 the chain is on the cytoplasmic side; the sequence is KHVRETKT. The helical transmembrane segment at 92–112 threads the bilayer; that stretch reads LAILSFVFLVAQALMGAAAVV. At 113–121 the chain is on the extracellular side; that stretch reads WGQMPAVLA. The helical transmembrane segment at 122–142 threads the bilayer; it reads IHFGISLISFASVILLTCLIF. His-123 contacts heme o. The Cytoplasmic segment spans residues 143–159; the sequence is EIDQKFDARSLIMDKKM. Residues 160-180 form a helical membrane-spanning segment; the sequence is KFHIYGVTIYSYIVVYTGALV. At 181-211 the chain is on the extracellular side; that stretch reads RHERATLACPDFPLCSKSRPMPTQLHEWVQM. Cys-189 and Cys-195 form a disulfide bridge. A helical membrane pass occupies residues 212–232; it reads GHRVAAMLIFAWILYAMIIAI. His-213 contributes to the heme b binding site. The Cytoplasmic segment spans residues 233–243; it reads RHYKQQRVVYW. The chain crosses the membrane as a helical span at residues 244 to 264; that stretch reads GWIISFILVTLQAIVGILVVF. Over 265 to 271 the chain is Extracellular; the sequence is TNASLAM. A helical transmembrane segment spans residues 272 to 292; the sequence is ALLHSLFISCLFAVLCYLVMI. Heme b is bound at residue His-275. Residues 293–311 are Cytoplasmic-facing; sequence GTRSTVNAKETESTSKQTK.

It belongs to the COX15/CtaA family. Type 1 subfamily. As to quaternary structure, interacts with CtaB. The cofactor is heme b.

It localises to the cell membrane. It catalyses the reaction Fe(II)-heme o + 2 A + H2O = Fe(II)-heme a + 2 AH2. Its pathway is porphyrin-containing compound metabolism; heme A biosynthesis; heme A from heme O: step 1/1. Catalyzes the conversion of heme O to heme A by two successive hydroxylations of the methyl group at C8. The first hydroxylation forms heme I, the second hydroxylation results in an unstable dihydroxymethyl group, which spontaneously dehydrates, resulting in the formyl group of heme A. The polypeptide is Heme A synthase (Bacillus mycoides (strain KBAB4) (Bacillus weihenstephanensis)).